The sequence spans 181 residues: Protein Syd (181 aa).

This sequence belongs to the Syd family.

It is found in the cell inner membrane. Interacts with the SecY protein in vivo. May bind preferentially to an uncomplexed state of SecY, thus functioning either as a chelating agent for excess SecY in the cell or as a regulatory factor that negatively controls the translocase function. This Klebsiella pneumoniae subsp. pneumoniae (strain ATCC 700721 / MGH 78578) protein is Protein Syd.